Here is a 391-residue protein sequence, read N- to C-terminus: Alpha-2B adrenergic receptor (391 aa).

The helical transmembrane segment at 1–25 (AIAAVITFLILFTIFGNALVILAVL) threads the bilayer. Residues 26 to 36 (TSRSLRAPQNL) lie on the Cytoplasmic side of the membrane. Residues 37–62 (FLVSLAAADILVATLIIPFSLANELL) form a helical membrane-spanning segment. The Extracellular portion of the chain corresponds to 63 to 72 (GYWYFRRTWC). Cys-72 and Cys-151 are disulfide-bonded. The helical transmembrane segment at 73 to 95 (EVYLALDVLFCTSSIVHLCAISL) threads the bilayer. The Cytoplasmic portion of the chain corresponds to 96-117 (DRYWAVSRALEYNSKRTPRRIK). The chain crosses the membrane as a helical span at residues 118 to 140 (CIILTVWLIAAVISLPPLIYKGD). Residues 141–156 (QGPQPRGRPQCKLNQE) lie on the Extracellular side of the membrane. A helical transmembrane segment spans residues 157–180 (AWYILASSIGSFFAPCLIMILVYL). At 181–355 (RIYLIAKRSH…LTREKRFTFV (175 aa)) the chain is on the cytoplasmic side. Disordered stretches follow at residues 194-218 (PRAK…APSS) and 233-312 (EANR…PLQQ). A compositionally biased stretch (basic and acidic residues) spans 233–247 (EANRHSKSTGEKVEG). Residues 256-266 (PGVPPSWPPLP) are compositionally biased toward pro residues. Residues 271 to 281 (GQEEDIYRASP) show a composition bias toward basic and acidic residues. The span at 282–294 (EEEAGDDEEEECE) shows a compositional bias: acidic residues. Low complexity predominate over residues 295–309 (PQAVPVSPASACSPP). The chain crosses the membrane as a helical span at residues 356–379 (LAVVIGVFVLCWFPFFFSYSLGAI). Residues 380–388 (CPQHCKVPH) are Extracellular-facing. A helical membrane pass occupies residues 389–391 (GLF).

Belongs to the G-protein coupled receptor 1 family. Adrenergic receptor subfamily. ADRA2B sub-subfamily. In terms of assembly, interacts with RAB26. Interacts with PPP1R9B. Interacts with GGA1, GGA2 and GGA3.

It is found in the cell membrane. Functionally, alpha-2 adrenergic receptors mediate the catecholamine-induced inhibition of adenylate cyclase through the action of G proteins. In Erinaceus europaeus (Western European hedgehog), this protein is Alpha-2B adrenergic receptor (ADRA2B).